A 217-amino-acid chain; its full sequence is FMN-dependent NADH:quinone oxidoreductase (217 aa).

Residues Ser10 and 16-18 contribute to the FMN site; that span reads SVS.

It belongs to the azoreductase type 1 family. As to quaternary structure, homodimer. It depends on FMN as a cofactor.

It catalyses the reaction 2 a quinone + NADH + H(+) = 2 a 1,4-benzosemiquinone + NAD(+). The enzyme catalyses N,N-dimethyl-1,4-phenylenediamine + anthranilate + 2 NAD(+) = 2-(4-dimethylaminophenyl)diazenylbenzoate + 2 NADH + 2 H(+). Quinone reductase that provides resistance to thiol-specific stress caused by electrophilic quinones. In terms of biological role, also exhibits azoreductase activity. Catalyzes the reductive cleavage of the azo bond in aromatic azo compounds to the corresponding amines. In Polaromonas naphthalenivorans (strain CJ2), this protein is FMN-dependent NADH:quinone oxidoreductase.